A 490-amino-acid polypeptide reads, in one-letter code: UDP-glycosyltransferase 84A1 (490 aa).

Histidine 30 acts as the Proton acceptor in catalysis. Residue histidine 30 participates in an anthocyanidin binding. UDP-alpha-D-glucose-binding residues include glutamine 358, histidine 373, tryptophan 376, asparagine 377, serine 378, and glutamate 381. Glycine 396 provides a ligand contact to an anthocyanidin. UDP-alpha-D-glucose is bound by residues aspartate 397 and glutamine 398.

Belongs to the UDP-glycosyltransferase family. In terms of tissue distribution, expressed in roots, flowers and siliques.

The enzyme catalyses (E)-4-coumarate + UDP-alpha-D-glucose = 4-O-(beta-D-glucosyl)-trans-4-coumarate + UDP + H(+). It carries out the reaction (E)-ferulate + UDP-alpha-D-glucose = 1-O-[(E)-feruloyl]-beta-D-glucose + UDP. The catalysed reaction is (E)-caffeate + UDP-alpha-D-glucose = 1-O-[(E)-caffeoyl]-beta-D-glucose + UDP. It catalyses the reaction (E)-sinapate + UDP-alpha-D-glucose = 1-O-(trans-sinapoyl)-beta-D-glucose + UDP. The enzyme catalyses (E)-cinnamate + UDP-alpha-D-glucose = 1-O-(trans-cinnamoyl)-beta-D-glucose + UDP. UDP-glucosyltransferase that forms glucose esters with phenylpropanoids. Glucosylates 4-coumarate, ferulate, caffeate, sinapate and cinnamate. Can glucosylate the phytotoxic xenobiotic compound 2,4,5-trichlorophenol (TCP). This chain is UDP-glycosyltransferase 84A1, found in Arabidopsis thaliana (Mouse-ear cress).